The following is a 516-amino-acid chain: Putative protein NRT1/ PTR FAMILY 2.2 (516 aa).

11 helical membrane passes run 31-51, 67-87, 90-110, 138-158, 174-194, 201-221, 320-340, 362-382, 394-414, 437-457, and 476-496; these read TLLG…VFLI, IVNG…DSFF, IPVI…LTMI, ILYI…FTLA, FFNW…TAIV, SWKL…IVFV, LLLA…LIIL, VIVI…VYPM, LQKV…SAIV, FIAS…ITLI, and VYWL…AWFY.

This sequence belongs to the major facilitator superfamily. Proton-dependent oligopeptide transporter (POT/PTR) (TC 2.A.17) family. Not detected.

It localises to the membrane. Its function is as follows. Transporter involved in a passive nitrate efflux. In Arabidopsis thaliana (Mouse-ear cress), this protein is Putative protein NRT1/ PTR FAMILY 2.2 (NPF2.2).